We begin with the raw amino-acid sequence, 180 residues long: Probable chorismate pyruvate-lyase (180 aa).

Residues Arg-82, Leu-120, and Glu-165 each contribute to the substrate site.

This sequence belongs to the UbiC family.

Its subcellular location is the cytoplasm. It carries out the reaction chorismate = 4-hydroxybenzoate + pyruvate. The protein operates within cofactor biosynthesis; ubiquinone biosynthesis. Removes the pyruvyl group from chorismate, with concomitant aromatization of the ring, to provide 4-hydroxybenzoate (4HB) for the ubiquinone pathway. This is Probable chorismate pyruvate-lyase from Aliivibrio fischeri (strain ATCC 700601 / ES114) (Vibrio fischeri).